The primary structure comprises 213 residues: Holliday junction branch migration complex subunit RuvA (213 aa).

The domain I stretch occupies residues 1 to 63; that stretch reads MIGMLTGRVA…EDAFKLYGFL (63 aa). A domain II region spans residues 64 to 142; that stretch reads DDIDRAWFVH…PTGRSFSIGL (79 aa). The flexible linker stretch occupies residues 143–160; that stretch reads PVHSDDGTTGGAPVAPAG. Positions 161–213 are domain III; that stretch reads GDSLAREDAVSALVNLGYNESQARQAVAKILRDADSEAPLGDVIRLSLKELAA.

This sequence belongs to the RuvA family. Homotetramer. Forms an RuvA(8)-RuvB(12)-Holliday junction (HJ) complex. HJ DNA is sandwiched between 2 RuvA tetramers; dsDNA enters through RuvA and exits via RuvB. An RuvB hexamer assembles on each DNA strand where it exits the tetramer. Each RuvB hexamer is contacted by two RuvA subunits (via domain III) on 2 adjacent RuvB subunits; this complex drives branch migration. In the full resolvosome a probable DNA-RuvA(4)-RuvB(12)-RuvC(2) complex forms which resolves the HJ.

The protein localises to the cytoplasm. Functionally, the RuvA-RuvB-RuvC complex processes Holliday junction (HJ) DNA during genetic recombination and DNA repair, while the RuvA-RuvB complex plays an important role in the rescue of blocked DNA replication forks via replication fork reversal (RFR). RuvA specifically binds to HJ cruciform DNA, conferring on it an open structure. The RuvB hexamer acts as an ATP-dependent pump, pulling dsDNA into and through the RuvAB complex. HJ branch migration allows RuvC to scan DNA until it finds its consensus sequence, where it cleaves and resolves the cruciform DNA. The sequence is that of Holliday junction branch migration complex subunit RuvA from Maricaulis maris (strain MCS10) (Caulobacter maris).